The following is a 1635-amino-acid chain: Cortactin-binding protein 2 (1635 aa).

4 disordered regions span residues 1 to 20, 193 to 219, 264 to 469, and 483 to 582; these read MATA…ARTS, ASKL…KSSQ, EQLR…DNLV, and SRFT…PHGI. Residues 116–273 adopt a coiled-coil conformation; it reads RKMQERMSAQ…EQLRKGNDHK (158 aa). 2 stretches are compositionally biased toward basic and acidic residues: residues 193–205 and 264–274; these read ASKL…KTGE and EQLRKGNDHKP. Low complexity-rich tracts occupy residues 320–331 and 375–395; these read PPVAVPAKPSSA and GPSS…LLNN. Residues 402 to 414 are compositionally biased toward polar residues; the sequence is SQNHSLTSSTPNL. A compositionally biased stretch (low complexity) spans 439 to 453; that stretch reads QGNANDQDQNGNTTQ. The span at 454 to 466 shows a compositional bias: polar residues; the sequence is SPPSREVSPTSRD. R484 bears the Asymmetric dimethylarginine mark. ANK repeat units lie at residues 697–727, 731–760, 764–793, 797–826, 830–859, and 893–923; these read GRPT…DINH, DGSS…QVDD, NGFT…DINH, GGQT…DRSI, DGWT…PESE, and EGWT…EAER. A disordered region spans residues 856–876; the sequence is PESENSGSKDQTGLGSREESR. Over residues 858-869 the composition is skewed to polar residues; that stretch reads SENSGSKDQTGL. Positions 1420-1469 are disordered; sequence SHRKKGESGSWRKVNTSPRKKSGLSSSQTWTKQEATKDGVRNDTGHQNGN. Positions 1432–1452 are enriched in polar residues; sequence KVNTSPRKKSGLSSSQTWTKQ. Positions 1453–1463 are enriched in basic and acidic residues; the sequence is EATKDGVRNDT. Residue S1498 is modified to Phosphoserine. Positions 1531–1624 are disordered; sequence RMFGSSRTDP…RQREINNNLK (94 aa). Polar residues-rich tracts occupy residues 1546–1555 and 1563–1577; these read PTMSDRSLPS and LSSN…NTPK. Basic and acidic residues predominate over residues 1615-1624; the sequence is RQREINNNLK.

In terms of assembly, interacts with CTTN/cortactin SH3 domain. Interacts with STRN, STRN4/zinedin and MOB4/phocein; this interactions mediate the association with the STRIPAK core complex and may regulate dendritic spine distribution of the STRIPAK complex in hippocampal neurons. Activation of glutamate receptors weakens the interaction with STRN and STRN4.

It is found in the cytoplasm. Its subcellular location is the cell cortex. It localises to the cell projection. The protein resides in the dendritic spine. Regulates the dendritic spine distribution of CTTN/cortactin in hippocampal neurons, and thus controls dendritic spinogenesis and dendritic spine maintenance. Associates with the striatin-interacting phosphatase and kinase (STRIPAK) core complex to regulate dendritic spine distribution of the STRIPAK complex in hippocampal neurons. This is Cortactin-binding protein 2 (CTTNBP2) from Ornithorhynchus anatinus (Duckbill platypus).